The chain runs to 271 residues: Ribosomal RNA small subunit methyltransferase A (271 aa).

The S-adenosyl-L-methionine site is built by histidine 11, leucine 13, glycine 38, glutamate 58, aspartate 86, and asparagine 101.

This sequence belongs to the class I-like SAM-binding methyltransferase superfamily. rRNA adenine N(6)-methyltransferase family. RsmA subfamily.

It localises to the cytoplasm. The catalysed reaction is adenosine(1518)/adenosine(1519) in 16S rRNA + 4 S-adenosyl-L-methionine = N(6)-dimethyladenosine(1518)/N(6)-dimethyladenosine(1519) in 16S rRNA + 4 S-adenosyl-L-homocysteine + 4 H(+). In terms of biological role, specifically dimethylates two adjacent adenosines (A1518 and A1519) in the loop of a conserved hairpin near the 3'-end of 16S rRNA in the 30S particle. May play a critical role in biogenesis of 30S subunits. This chain is Ribosomal RNA small subunit methyltransferase A, found in Helicobacter acinonychis (strain Sheeba).